Reading from the N-terminus, the 154-residue chain is 17 kDa surface antigen (154 aa).

A signal peptide spans 1-19; that stretch reads MKLLSKIMVIALATSMLQA. A lipid anchor (N-palmitoyl cysteine) is attached at cysteine 20. Residue cysteine 20 is the site of S-diacylglycerol cysteine attachment.

Belongs to the rickettsiale 17 kDa surface antigen family.

It is found in the cell outer membrane. The protein is 17 kDa surface antigen (omp) of Rickettsia parkeri.